The following is a 444-amino-acid chain: D(2) dopamine receptor (444 aa).

Topologically, residues 1–37 (MDPLNLSWYDDDLERQNWSRPFNGSEGKADRPHYNYY) are extracellular. Asn5, Asn17, and Asn23 each carry an N-linked (GlcNAc...) asparagine glycan. A helical transmembrane segment spans residues 38 to 60 (AMLLTLLIFIIVFGNVLVCMAVS). Residues 61–70 (REKALQTTTN) lie on the Cytoplasmic side of the membrane. Residues 71–93 (YLIVSLAVADLLVATLVMPWVVY) traverse the membrane as a helical segment. Residues 94 to 108 (LEVVGEWKFSRIHCD) lie on the Extracellular side of the membrane. Cys107 and Cys182 form a disulfide bridge. The chain crosses the membrane as a helical span at residues 109-130 (IFVTLDVMMCTASILNLCAISI). Residues 131–151 (DRYTAVAMPMLYNTRYSSKRR) are Cytoplasmic-facing. A helical membrane pass occupies residues 152 to 172 (VTVMIAIVWVLSFTISCPLLF). At 173 to 188 (GLNNTDQNECIIANPA) the chain is on the extracellular side. Residues 189–213 (FVVYSSIVSFYVPFIVTLLVYIKIY) form a helical membrane-spanning segment. An interaction with PPP1R9B region spans residues 211–374 (KIYIVLRKRR…SQQKEKKATQ (164 aa)). Topologically, residues 214–374 (IVLRKRRKRV…SQQKEKKATQ (161 aa)) are cytoplasmic. Residues 282-329 (EMLSSTSPPERTRYSPIPPSHHQLTLPDPSHHGLHSNPDSPAKPEKNG) are disordered. Residues 375-396 (MLAIVLGVFIICWLPFFITHIL) form a helical membrane-spanning segment. The Extracellular segment spans residues 397–410 (NIHCDCNIPPVLYS). Cys400 and Cys402 form a disulfide bridge. Residues 411–432 (AFTWLGYVNSAVNPIIYTTFNI) traverse the membrane as a helical segment. The Cytoplasmic segment spans residues 433-444 (EFRKAFMKILHC). Cys444 carries S-palmitoyl cysteine lipidation.

It belongs to the G-protein coupled receptor 1 family. As to quaternary structure, forms homo- and heterooligomers with DRD4. The interaction with DRD4 may modulate agonist-induced downstream signaling. Interacts with CADPS and CADPS2. Interacts with GPRASP1, PPP1R9B and CLIC6. Interacts with ARRB2. Interacts with HTR2A. Interacts with DRD1. Interacts with KCNA2. Post-translationally, palmitoylated. Palmitoylation which is required for proper localization to the plasma membrane and stability of the receptor could be carried on by ZDHHC4, ZDHHC3 and ZDHHC8. Expressed in the anterior lobe of the pituitary gland. Expressed ventral tegmental area of the midbrain and the pars compacta of the substantia nigra. Expressed seven times more than isoform short in the caudate nucleus. As to expression, expressed in the anterior lobe of the pituitary gland. Expressed in the caudate nucleus. Not expressed in the wider brain.

Its subcellular location is the cell membrane. The protein localises to the golgi apparatus membrane. Its function is as follows. Dopamine receptor whose activity is mediated by G proteins which inhibit adenylyl cyclase. Positively regulates postnatal regression of retinal hyaloid vessels via suppression of VEGFR2/KDR activity, downstream of OPN5. This Rattus norvegicus (Rat) protein is D(2) dopamine receptor (Drd2).